The following is a 639-amino-acid chain: MSQIADKDVAEKPDADDSHKNKGLYAAILGSIGVVYGDIGTSPLYAFREALKPIAYDGVTREEVIGLTSLMIWSLTIIVTFKYITLLLRADNDGEGGTLSLLALLMKTAGTHRSVLIVLGLIGAALFLGDAMITPALSVLSAVEGLKLVTPAMDDFIIPISVCILIGLFAIQSHGTGTVAKFFGPITAVWFLVMGGAGLIHIADDFGILFAFNPWHAVEFLANEGFYGVVVLGAVFLTITGAEALYADLGHFGRRPIQWAWFCLVFPALTLNYLGQGALVLKDPAAMSNPFYLMFPQWAILPAVILATAATIIASQAVITGAFSLVRQAIHLGYLPRMEILFTSETNTGQIYLPAVNTILLFGVVALVLTFKSSDALATAYGISVTGAMVVTSLMFFEFVRKRWQWSIWLALAVLTPLLLLELIFLGANLLKIHDGGYVPVLLAIAFTVIMTTWQRGSRILFAKTRRGDVPLKAFVASVEKESAHAPVRVPGTAIFLTGDPEAAPAALLHNLKHNHVLHDKNVILTIRTEDQPRVRPEDRYTLTKLSDRFAVVELHFGFMETQNVTQALGYLRRTGYKFDIMSTSFYLGRRKLVPDPKSGMPGWQNRLFIALAETAADPSDYFRLPANRVVELGSHVVV.

12 helical membrane-spanning segments follow: residues 27 to 47 (AILG…LYAF), 64 to 84 (VIGL…FKYI), 115 to 135 (VLIV…MITP), 151 to 171 (PAMD…LFAI), 182 to 202 (FFGP…LIHI), 225 to 245 (GFYG…AEAL), 261 to 281 (WFCL…ALVL), 293 to 313 (LMFP…ATII), 351 to 371 (IYLP…VLTF), 377 to 397 (LATA…LMFF), 408 to 428 (IWLA…FLGA), and 430 to 450 (LLKI…FTVI).

This sequence belongs to the HAK/KUP transporter (TC 2.A.72) family.

Its subcellular location is the cell inner membrane. The catalysed reaction is K(+)(in) + H(+)(in) = K(+)(out) + H(+)(out). Its function is as follows. Transport of potassium into the cell. Likely operates as a K(+):H(+) symporter. The protein is Probable potassium transport system protein Kup 1 of Agrobacterium fabrum (strain C58 / ATCC 33970) (Agrobacterium tumefaciens (strain C58)).